The sequence spans 180 residues: uncharacterized protein (180 aa).

This is an uncharacterized protein from Clostridium acetobutylicum (strain ATCC 824 / DSM 792 / JCM 1419 / IAM 19013 / LMG 5710 / NBRC 13948 / NRRL B-527 / VKM B-1787 / 2291 / W).